The following is a 103-amino-acid chain: Small ribosomal subunit protein uS10 (103 aa).

It belongs to the universal ribosomal protein uS10 family. As to quaternary structure, part of the 30S ribosomal subunit.

Functionally, involved in the binding of tRNA to the ribosomes. This Bordetella avium (strain 197N) protein is Small ribosomal subunit protein uS10.